Here is a 201-residue protein sequence, read N- to C-terminus: Recombination protein RecR (201 aa).

The C4-type zinc-finger motif lies at 60-75 (CKTCGNIDTQNPCTVC). One can recognise a Toprim domain in the interval 83–178 (SIIVVVADVA…KVTRLAHGVP (96 aa)).

It belongs to the RecR family.

Its function is as follows. May play a role in DNA repair. It seems to be involved in an RecBC-independent recombinational process of DNA repair. It may act with RecF and RecO. The polypeptide is Recombination protein RecR (Rhodopseudomonas palustris (strain HaA2)).